The chain runs to 634 residues: Threonine--tRNA ligase (634 aa).

The region spanning 1–61 is the TGS domain; the sequence is MISLKFPNNE…SESGEFRLYT (61 aa). A catalytic region spans residues 242-532; that stretch reads DHRKIGQELD…LIEHYAGAFP (291 aa). The Zn(2+) site is built by C333, H384, and H509.

The protein belongs to the class-II aminoacyl-tRNA synthetase family. As to quaternary structure, homodimer. Requires Zn(2+) as cofactor.

The protein resides in the cytoplasm. The catalysed reaction is tRNA(Thr) + L-threonine + ATP = L-threonyl-tRNA(Thr) + AMP + diphosphate + H(+). Catalyzes the attachment of threonine to tRNA(Thr) in a two-step reaction: L-threonine is first activated by ATP to form Thr-AMP and then transferred to the acceptor end of tRNA(Thr). Also edits incorrectly charged L-seryl-tRNA(Thr). In Carboxydothermus hydrogenoformans (strain ATCC BAA-161 / DSM 6008 / Z-2901), this protein is Threonine--tRNA ligase.